A 211-amino-acid polypeptide reads, in one-letter code: Holliday junction branch migration complex subunit RuvA (211 aa).

A domain I region spans residues 1–64 (MIGRLRGMLV…EDAQLLYGFA (64 aa)). Positions 65-143 (NKVERKLFRL…DWQAQQIHLV (79 aa)) are domain II. The interval 144-162 (SDDGVIPEQLSAELSQETT) is flexible linker. The segment at 163-211 (FVNDNKGDAINALLSLGYKQVQADKAVKSVYNRGMSSENIIRDALKSMI) is domain III.

This sequence belongs to the RuvA family. Homotetramer. Forms an RuvA(8)-RuvB(12)-Holliday junction (HJ) complex. HJ DNA is sandwiched between 2 RuvA tetramers; dsDNA enters through RuvA and exits via RuvB. An RuvB hexamer assembles on each DNA strand where it exits the tetramer. Each RuvB hexamer is contacted by two RuvA subunits (via domain III) on 2 adjacent RuvB subunits; this complex drives branch migration. In the full resolvosome a probable DNA-RuvA(4)-RuvB(12)-RuvC(2) complex forms which resolves the HJ.

It is found in the cytoplasm. Its function is as follows. The RuvA-RuvB-RuvC complex processes Holliday junction (HJ) DNA during genetic recombination and DNA repair, while the RuvA-RuvB complex plays an important role in the rescue of blocked DNA replication forks via replication fork reversal (RFR). RuvA specifically binds to HJ cruciform DNA, conferring on it an open structure. The RuvB hexamer acts as an ATP-dependent pump, pulling dsDNA into and through the RuvAB complex. HJ branch migration allows RuvC to scan DNA until it finds its consensus sequence, where it cleaves and resolves the cruciform DNA. The polypeptide is Holliday junction branch migration complex subunit RuvA (Colwellia psychrerythraea (strain 34H / ATCC BAA-681) (Vibrio psychroerythus)).